A 379-amino-acid polypeptide reads, in one-letter code: Putative acetyl-CoA C-acetyltransferase VraB (379 aa).

Cysteine 86 acts as the Acyl-thioester intermediate in catalysis. The active-site Proton acceptor is histidine 338.

It belongs to the thiolase-like superfamily. Thiolase family.

The chain is Putative acetyl-CoA C-acetyltransferase VraB (vraB) from Staphylococcus aureus (strain MRSA252).